We begin with the raw amino-acid sequence, 582 residues long: MSFHSFYQRASSLFKAYPSTSKILLLSTFSGGGGVLVYSDSNPLKRILHADATLDSDGNPIRKKKVVVLGSGWSGYSFLSYLNNPNYDVQVVSPRNFFLFTPLLPSVTNGTVEARSIVEPIRGLMRKKGFEYKEAECVKIDASNKKIHCRSKEGSSLKGTTEFDMDYDILILAVGAKPNTFNTPGVEEHAYFLKEAEDALNIRHSVIDCFERASLPNLTEEERKKILHFVVVGGGPTGVEFSAELHDFLVQDVAKIYPKVQEFTKITLLEAGDHILNMFDKRITAFAEEKFQRDGIDLKTGSMVVGVTADEISTKERETGKIVSEPYGMVVWSTGIGSRPVIKDFMQQIGQGQRRVLATDEWLRVEGCDGVYALGDTATINQRRVMEDIAAIFNKADKGNTGTLKKKDFNSVVKDICQRYPQVELYLKKNKLKNIANLLKSANGEDTQVNIEKFKQALSEVDSQMKNLPATAQVASQQGKYLAKCFNKMEKCEKKPEGPLRFRGEGRHRFQPFRYRHFGSFAPLGGEQTAAELPGDWVSIGHSSQWLWYSVYASKLVSWRTRMLVISDWTRRFVFGRDSSSI.

Residues 1–39 (MSFHSFYQRASSLFKAYPSTSKILLLSTFSGGGGVLVYS) constitute a mitochondrion transit peptide. 65 to 95 (KVVVLGSGWSGYSFLSYLNNPNYDVQVVSPR) contributes to the FAD binding site. Residue 227–263 (LHFVVVGGGPTGVEFSAELHDFLVQDVAKIYPKVQEF) participates in NAD(+) binding. An EF-hand domain is found at 384–419 (RVMEDIAAIFNKADKGNTGTLKKKDFNSVVKDICQR). 4 residues coordinate Ca(2+): Asp397, Thr401, Thr403, and Asp408. Positions 573–582 (FVFGRDSSSI) match the Microbody targeting signal motif.

The protein belongs to the NADH dehydrogenase family. The cofactor is FAD. Expressed in seedlings, roots, cotyledons, stems, buds and flowers and, to a lower extent, in stems and leaves.

Its subcellular location is the mitochondrion inner membrane. The protein localises to the peroxisome. The enzyme catalyses a quinone + NADH + H(+) = a quinol + NAD(+). The catalysed reaction is a ubiquinone + NADH + H(+) = a ubiquinol + NAD(+). No effect of calcium ions on activity. Alternative NADH-ubiquinone oxidoreductase which catalyzes the oxidation of mitochondrial NADH does not translocate protons across the inner mitochondrial membrane. NAD(P)H dehydrogenase; more efficient on NADH. The polypeptide is External alternative NAD(P)H-ubiquinone oxidoreductase B4, mitochondrial (NDB4) (Arabidopsis thaliana (Mouse-ear cress)).